The primary structure comprises 329 residues: Beta-ketoacyl-[acyl-carrier-protein] synthase III (329 aa).

Active-site residues include Cys-112 and His-253. The interval Gln-254–Arg-258 is ACP-binding. Asn-283 is an active-site residue.

Belongs to the thiolase-like superfamily. FabH family. As to quaternary structure, homodimer.

It localises to the cytoplasm. It carries out the reaction malonyl-[ACP] + acetyl-CoA + H(+) = 3-oxobutanoyl-[ACP] + CO2 + CoA. It functions in the pathway lipid metabolism; fatty acid biosynthesis. Catalyzes the condensation reaction of fatty acid synthesis by the addition to an acyl acceptor of two carbons from malonyl-ACP. Catalyzes the first condensation reaction which initiates fatty acid synthesis and may therefore play a role in governing the total rate of fatty acid production. Possesses both acetoacetyl-ACP synthase and acetyl transacylase activities. Its substrate specificity determines the biosynthesis of branched-chain and/or straight-chain of fatty acids. The protein is Beta-ketoacyl-[acyl-carrier-protein] synthase III of Gloeobacter violaceus (strain ATCC 29082 / PCC 7421).